The chain runs to 357 residues: 3-isopropylmalate dehydrogenase (357 aa).

Residues Arg97, Arg107, Arg135, and Asp224 each contribute to the substrate site. Positions 224, 248, and 252 each coordinate Mg(2+). 282–294 (GSAPDIAGQDKAN) serves as a coordination point for NAD(+).

Belongs to the isocitrate and isopropylmalate dehydrogenases family. LeuB type 1 subfamily. Homodimer. It depends on Mg(2+) as a cofactor. The cofactor is Mn(2+).

It localises to the cytoplasm. The catalysed reaction is (2R,3S)-3-isopropylmalate + NAD(+) = 4-methyl-2-oxopentanoate + CO2 + NADH. Its pathway is amino-acid biosynthesis; L-leucine biosynthesis; L-leucine from 3-methyl-2-oxobutanoate: step 3/4. Its function is as follows. Catalyzes the oxidation of 3-carboxy-2-hydroxy-4-methylpentanoate (3-isopropylmalate) to 3-carboxy-4-methyl-2-oxopentanoate. The product decarboxylates to 4-methyl-2 oxopentanoate. This chain is 3-isopropylmalate dehydrogenase, found in Synechococcus sp. (strain CC9605).